Here is a 327-residue protein sequence, read N- to C-terminus: Methionyl-tRNA formyltransferase (327 aa).

121 to 124 is a binding site for (6S)-5,6,7,8-tetrahydrofolate; sequence SLLP.

Belongs to the Fmt family.

The enzyme catalyses L-methionyl-tRNA(fMet) + (6R)-10-formyltetrahydrofolate = N-formyl-L-methionyl-tRNA(fMet) + (6S)-5,6,7,8-tetrahydrofolate + H(+). Functionally, attaches a formyl group to the free amino group of methionyl-tRNA(fMet). The formyl group appears to play a dual role in the initiator identity of N-formylmethionyl-tRNA by promoting its recognition by IF2 and preventing the misappropriation of this tRNA by the elongation apparatus. The polypeptide is Methionyl-tRNA formyltransferase (Burkholderia pseudomallei (strain 1106a)).